Reading from the N-terminus, the 239-residue chain is tRNA (guanine-N(1)-)-methyltransferase (239 aa).

Residues Gly112 and Ile132–Leu137 each bind S-adenosyl-L-methionine.

This sequence belongs to the RNA methyltransferase TrmD family. Homodimer.

Its subcellular location is the cytoplasm. The catalysed reaction is guanosine(37) in tRNA + S-adenosyl-L-methionine = N(1)-methylguanosine(37) in tRNA + S-adenosyl-L-homocysteine + H(+). Specifically methylates guanosine-37 in various tRNAs. The sequence is that of tRNA (guanine-N(1)-)-methyltransferase from Rhodospirillum rubrum (strain ATCC 11170 / ATH 1.1.1 / DSM 467 / LMG 4362 / NCIMB 8255 / S1).